A 1203-amino-acid polypeptide reads, in one-letter code: DNA-directed RNA polymerase subunit beta' (1203 aa).

Positions 60, 62, 75, and 78 each coordinate Zn(2+). Residues D449, D451, and D453 each contribute to the Mg(2+) site. Zn(2+)-binding residues include C818, C892, C899, and C902.

Belongs to the RNA polymerase beta' chain family. As to quaternary structure, the RNAP catalytic core consists of 2 alpha, 1 beta, 1 beta' and 1 omega subunit. When a sigma factor is associated with the core the holoenzyme is formed, which can initiate transcription. Requires Mg(2+) as cofactor. It depends on Zn(2+) as a cofactor.

It catalyses the reaction RNA(n) + a ribonucleoside 5'-triphosphate = RNA(n+1) + diphosphate. DNA-dependent RNA polymerase catalyzes the transcription of DNA into RNA using the four ribonucleoside triphosphates as substrates. In Bacillus cereus (strain ATCC 10987 / NRS 248), this protein is DNA-directed RNA polymerase subunit beta'.